Consider the following 521-residue polypeptide: Importin subunit alpha-4 (521 aa).

The disordered stretch occupies residues 1 to 29; it reads MAENPSLENHRIKSFKNKGRDVETMRRHR. Position 2 is an N-acetylalanine (alanine 2). In terms of domain architecture, IBB spans 2 to 58; sequence AENPSLENHRIKSFKNKGRDVETMRRHRNEVTVELRKNKRDEHLLKKRNVPQEESLE. Basic and acidic residues predominate over residues 18 to 29; the sequence is KGRDVETMRRHR. Positions 43-52 match the Nuclear localization signal motif; that stretch reads EHLLKKRNVP. Residues serine 56 and serine 60 each carry the phosphoserine modification. An ARM 1; truncated repeat occupies 66-106; it reads FKAQNVTLEAILQNATSDNPVVQLSAVQAARKLLSSDRNPP. ARM repeat units follow at residues 107–149, 150–194, 195–233, 234–278, 279–318, 319–360, 361–400, and 401–443; these read IDDL…TSAQ, TQAV…CRDY, VISLGVVKPLLSFISPSIPITFLRNVTWVIVNLCRNKDP, PPPM…EQIQ, MVIDSGVVPFLVPLLSHQEVKVQTAALRAVGNIVTGTDEQ, TQVV…NQQQ, VQAVIDAGLIPMIIHQLAKGDFGTQKEAAWAISNLTISGR, and KDQV…IMAG. An NLS binding site (major) region spans residues 137-229; sequence WALTNIASGT…VTWVIVNLCR (93 aa). An NLS binding site (minor) region spans residues 306 to 394; it reads RAVGNIVTGT…QKEAAWAISN (89 aa). Residues 447-485 form an ARM 10; atypical repeat; that stretch reads STIAEIIEECGGLEKIEVLQQHENEDIYKLAFEIIDQYF. Tyrosine 484 carries the phosphotyrosine modification.

Belongs to the importin alpha family. In terms of assembly, forms a complex with importin subunit beta-1. Interacts with DDX21. Interacts with NCBP1, NCBP2/CBP20 and NCBP3. Interacts with RCC1. Interacts with ZC3H11A. (Microbial infection) Interacts with HIV-1 integrase; this interaction might play a role in nuclear import of HIV pre-integration complex. As to quaternary structure, (Microbial infection) Interacts with influenza virus nucleoprotein; this interaction might play a role in nuclear import of viral genome. In terms of tissue distribution, ubiquitous. Highest levels in heart and skeletal muscle.

The protein localises to the cytoplasm. It is found in the nucleus. Its function is as follows. Functions in nuclear protein import as an adapter protein for nuclear receptor KPNB1. Binds specifically and directly to substrates containing either a simple or bipartite NLS motif. Docking of the importin/substrate complex to the nuclear pore complex (NPC) is mediated by KPNB1 through binding to nucleoporin FxFG repeats and the complex is subsequently translocated through the pore by an energy requiring, Ran-dependent mechanism. At the nucleoplasmic side of the NPC, Ran binds to importin-beta and the three components separate and importin-alpha and -beta are re-exported from the nucleus to the cytoplasm where GTP hydrolysis releases Ran from importin. The directionality of nuclear import is thought to be conferred by an asymmetric distribution of the GTP- and GDP-bound forms of Ran between the cytoplasm and nucleus. In vitro, mediates the nuclear import of human cytomegalovirus UL84 by recognizing a non-classical NLS. Recognizes NLSs of influenza A virus nucleoprotein probably through ARM repeats 7-9. The chain is Importin subunit alpha-4 (KPNA3) from Homo sapiens (Human).